We begin with the raw amino-acid sequence, 145 residues long: Procyclic form-specific polypeptide B-alpha (145 aa).

The first 27 residues, 1 to 27 (MAPRSLYLLAVLLFSANLFAGVGFAAA), serve as a signal peptide directing secretion. The segment at 28–127 (AEGPEDKGLT…PEPEPGAATL (100 aa)) is disordered. The span at 31–52 (PEDKGLTKGGKGKGEKGTKVGA) shows a compositional bias: basic and acidic residues. 32 tandem repeats follow at residues 59 to 60 (DP), 61 to 62 (DP), 63 to 64 (EP), 65 to 66 (EP), 67 to 68 (EP), 69 to 70 (EP), 71 to 72 (EP), 73 to 74 (EP), 75 to 76 (EP), 77 to 78 (EP), 79 to 80 (EP), 81 to 82 (EP), 83 to 84 (EP), 85 to 86 (EP), 87 to 88 (EP), 89 to 90 (EP), 91 to 92 (EP), 93 to 94 (EP), 95 to 96 (EP), 97 to 98 (EP), 99 to 100 (EP), 101 to 102 (EP), 103 to 104 (EP), 105 to 106 (EP), 107 to 108 (EP), 109 to 110 (EP), 111 to 112 (EP), 113 to 114 (EP), 115 to 116 (EP), 117 to 118 (EP), 119 to 120 (EP), and 121 to 122 (EP). Residues 59 to 122 (DPDPEPEPEP…EPEPEPEPEP (64 aa)) form a 32 X 2 AA tandem repeats of [DE]-P region. The segment covering 60–120 (PDPEPEPEPE…EPEPEPEPEP (61 aa)) has biased composition (acidic residues). The GPI-anchor amidated glycine moiety is linked to residue Gly123. The propeptide occupies 124–145 (AATLKSVALPFAIAAAALVAAF).

The protein resides in the cell membrane. In terms of biological role, major surface antigen of procyclic forms. This chain is Procyclic form-specific polypeptide B-alpha (PARPB), found in Trypanosoma brucei brucei.